The chain runs to 794 residues: Signal transducer and activator of transcription 5A (794 aa).

At Tyr-90 the chain carries Phosphotyrosine. Phosphoserine is present on Ser-128. One can recognise an SH2 domain in the interval 589 to 686 (WNDGAILGFV…EVFSKYYTPV (98 aa)). The residue at position 682 (Tyr-682) is a Phosphotyrosine. Tyr-694 is modified (phosphotyrosine; by JAK2). The tract at residues 771–794 (PMDSLEPSLPPPTGLFTPGRGSLS) is disordered.

Belongs to the transcription factor STAT family. Forms a homodimer or a heterodimer with a related family member. Binds NR3C1. Interacts with NCOA1 and SOCS7. Interacts with ERBB4. Interacts with EBF4. Interacts with CD69. ISGylated. Post-translationally, tyrosine phosphorylated in response to KITLG/SCF, IL2, IL3, IL7, IL15, CSF2/GMCSF, GH1, PRL, EPO and THPO. Activated KIT promotes phosphorylation on tyrosine residues and subsequent translocation to the nucleus. Tyrosine phosphorylated in response to constitutively activated FGFR1, FGFR2, FGFR3 and FGFR4. Tyrosine phosphorylation is required for DNA-binding activity and dimerization. Serine phosphorylation is also required for maximal transcriptional activity. Tyrosine phosphorylated in response to signaling via activated FLT3; wild-type FLT3 results in much weaker phosphorylation than constitutively activated mutant FLT3. Alternatively, can be phosphorylated by JAK2 at Tyr-694.

It localises to the cytoplasm. The protein resides in the nucleus. Functionally, carries out a dual function: signal transduction and activation of transcription. Mediates cellular responses to the cytokine KITLG/SCF and other growth factors. May mediate cellular responses to activated FGFR1, FGFR2, FGFR3 and FGFR4. Binds to the GAS element and activates PRL-induced transcription. Regulates the expression of milk proteins during lactation. The chain is Signal transducer and activator of transcription 5A (STAT5A) from Bos taurus (Bovine).